The primary structure comprises 421 residues: C2 calcium-dependent domain-containing protein 4C (421 aa).

4 disordered regions span residues 13–97 (RGSG…AKLA), 119–140 (DWLS…SLPS), 158–228 (HTRR…SPFG), and 250–303 (VSQL…TVHV). Over residues 215–228 (ESDTGSSAESSPFG) the composition is skewed to polar residues. Phosphoserine occurs at positions 262, 264, and 273. Positions 305-421 (PRGSVRLLAE…LPLTSLLPFL (117 aa)) constitute a C2 domain.

This sequence belongs to the C2CD4 family.

In Homo sapiens (Human), this protein is C2 calcium-dependent domain-containing protein 4C (C2CD4C).